A 663-amino-acid chain; its full sequence is Beta-galactosidase BgaH (663 aa).

Arg103 contributes to the substrate binding site. Cys107 is a Zn(2+) binding site. Position 141 (Asn141) interacts with substrate. Catalysis depends on Glu142, which acts as the Proton donor. 3 residues coordinate Zn(2+): Cys151, Cys153, and Cys156. Glu311 acts as the Nucleophile in catalysis. Substrate contacts are provided by residues Trp319 and 359–362; that span reads EQYH.

This sequence belongs to the glycosyl hydrolase 42 family. In terms of assembly, homodimer.

The catalysed reaction is Hydrolysis of terminal non-reducing beta-D-galactose residues in beta-D-galactosides.. With respect to regulation, requires 4 M NaCl for maximal activity. Loss of activity if DTT or beta-mercaptoethanol is omitted from buffers. Addition of 5-20 mM EDTA, 1 mM Cu(2+) or 1 mM Zn(2+) results in loss of activity. Functionally, when overexpressed, cleaves several different substrates including o-nitrophenyl-beta-D-galactopyranoside (ONPG), chromogen 5-bromo-4-chloro-3-indolyl-beta-D-galactopyranoside (X-Gal) and lactulose, but not lactose. Also has beta-D-fucosidase activity. No beta-L-fucosidase, beta-glucosidase, beta-arabinosidase or beta-xylosidase activity. This is Beta-galactosidase BgaH from Haloferax lucentense (strain DSM 14919 / JCM 9276 / NCIMB 13854 / Aa 2.2) (Haloferax alicantei).